Here is a 165-residue protein sequence, read N- to C-terminus: Nucleotide-binding protein MXAN_1478 (165 aa).

This sequence belongs to the YajQ family.

Nucleotide-binding protein. The sequence is that of Nucleotide-binding protein MXAN_1478 from Myxococcus xanthus (strain DK1622).